Reading from the N-terminus, the 278-residue chain is Large ribosomal subunit protein uL2 (278 aa).

The tract at residues 226–278 (NPIDHPHGGGEGRTSGGRHPVTPWGKPTKGKKTRSNKSTDKFILISRHKRKKK) is disordered.

The protein belongs to the universal ribosomal protein uL2 family. Part of the 50S ribosomal subunit. Forms a bridge to the 30S subunit in the 70S ribosome.

Its function is as follows. One of the primary rRNA binding proteins. Required for association of the 30S and 50S subunits to form the 70S ribosome, for tRNA binding and peptide bond formation. It has been suggested to have peptidyltransferase activity; this is somewhat controversial. Makes several contacts with the 16S rRNA in the 70S ribosome. In Rhodopseudomonas palustris (strain HaA2), this protein is Large ribosomal subunit protein uL2.